A 1067-amino-acid chain; its full sequence is Zinc finger MIZ domain-containing protein 1 (1067 aa).

Residues 1–120 (MNSMDRHIQQ…HQKSRQSDPP (120 aa)) are sufficient for transactivation activity; sufficient for interaction with NOTCH1. Lysine 91 participates in a covalent cross-link: Glycyl lysine isopeptide (Lys-Gly) (interchain with G-Cter in SUMO2). 2 disordered regions span residues 112-141 (QKSR…TLSH) and 327-542 (NSQF…PFPP). A compositionally biased stretch (low complexity) spans 128–141 (PLSSMSSMKPTLSH). The segment covering 413–429 (YGNQQYGPNSQFPTQPG) has biased composition (polar residues). A compositionally biased stretch (pro residues) spans 431–440 (YPAPNPPRPL). Over residues 479 to 497 (NNTFSGSSYSNYSQGNVNR) the composition is skewed to low complexity. Over residues 510 to 521 (SPVPGNPTPPMT) the composition is skewed to pro residues. The SP-RING-type zinc-finger motif lies at 727–808 (GEDGVEQTAI…MWGILNAIQH (82 aa)). Zn(2+) is bound by residues cysteine 758, histidine 760, cysteine 781, and cysteine 784. Glycyl lysine isopeptide (Lys-Gly) (interchain with G-Cter in SUMO2) cross-links involve residues lysine 834 and lysine 843. The segment at 837-1067 (PDGIPSKRFK…DDLLSLFENN (231 aa)) is transactivation domain. Residues 868–879 (GPSPYPLPPPPG) are compositionally biased toward pro residues. Residues 868–1067 (GPSPYPLPPP…DDLLSLFENN (200 aa)) form a disordered region. Polar residues-rich tracts occupy residues 881 to 895 (TNSN…NYQG) and 951 to 961 (SSDQPHPSIQQ). A compositionally biased stretch (pro residues) spans 981-996 (APPPPPSQPPRQPPQA). Positions 1040–1067 (PDELLSYLDPPDLPSNSNDDLLSLFENN) are enriched in low complexity.

Interacts with AR, but not with ESR1, NR3C1, PGR, THRB nor VDR. Interacts with NOTCH1 and RBPJ. Interacts with SMARCA4. Interacts (via SP-RING-type domain) with SMAD3 and SMAD4 (via MH2 domain). As to expression, expressed most abundantly in ovary and, at lower levels, in prostate, spleen and testis. Weak expression, if any, in thymus, small intestine, colon and peripheral blood leukocytes.

The protein resides in the nucleus. Its subcellular location is the nucleoplasm. The protein localises to the cytoplasm. Acts as a transcriptional coactivator. Increases ligand-dependent transcriptional activity of AR and promotes AR sumoylation. The stimulation of AR activity is dependent upon sumoylation. Also functions as a transcriptional coactivator in the TGF-beta signaling pathway by increasing the activity of the SMAD3/SMAD4 transcriptional complex. Involved in transcriptional activation of a subset of NOTCH1 target genes including MYC. Involved in thymocyte and T cell development. Involved in the regulation of postmitotic positioning of pyramidal neurons in the developing cerebral cortex. This chain is Zinc finger MIZ domain-containing protein 1, found in Homo sapiens (Human).